A 243-amino-acid chain; its full sequence is Vimentin A2 (243 aa).

The tract at residues 1 to 22 is coil 1B; that stretch reads GFSLQDELDFLKKLHDEELADV. The IF rod domain occupies 1–188; sequence GFSLQDELDF…KLLEGEESRI (188 aa). The interval 23–45 is linker 12; it reads QAQIQDQQVQVDMDMAKPDLTAA. Residues 46–184 form a coil 2 region; sequence LRDVRLQYEN…ATYRKLLEGE (139 aa). Positions 185–243 are tail; the sequence is ESRITTPLPNLSSFNLRDAILETKPILENTFSKKVLIKTIETRDGEVINESTQNHDDLE.

The protein belongs to the intermediate filament family. In terms of assembly, homomer. One of the most prominent phosphoproteins in various cells of mesenchymal origin. Phosphorylation is enhanced during cell division, at which time vimentin filaments are significantly reorganized. In terms of tissue distribution, expressed in low amounts in retina, optic nerve, and brain and in higher amounts in spinal cord.

Its function is as follows. Vimentins are class-III intermediate filaments found in various non-epithelial cells, especially mesenchymal cells. Vimentin is attached to the nucleus, endoplasmic reticulum, and mitochondria, either laterally or terminally. The chain is Vimentin A2 from Carassius auratus (Goldfish).